Consider the following 519-residue polypeptide: uncharacterized protein (519 aa).

The segment covering 477–486 has biased composition (basic residues); the sequence is IKRERAHVTQ. A disordered region spans residues 477-519; sequence IKRERAHVTQRNKPPPSGGDTAVAEGFEPPDGVSRLSLSRRVH.

This is an uncharacterized protein from Mycobacterium tuberculosis (strain ATCC 25618 / H37Rv).